We begin with the raw amino-acid sequence, 626 residues long: DEAD-box ATP-dependent RNA helicase 16 (626 aa).

Residues 1–48 (MGKTKLKPVEDVNSEVVDEVEKAEEVEEQRNDREQEEEQKEEEAPKSF) form a disordered region. Positions 9 to 47 (VEDVNSEVVDEVEKAEEVEEQRNDREQEEEQKEEEAPKS) form a coiled coil. The span at 12–27 (VNSEVVDEVEKAEEVE) shows a compositional bias: acidic residues. The Q motif motif lies at 46 to 74 (KSFEELGLDSRLIRALTKKGIEKPTLIQQ). The Helicase ATP-binding domain maps to 77–259 (IPYILEGKDV…KLILHNPIVL (183 aa)). 90–97 (AKTGSGKT) contacts ATP. A DEAD box motif is present at residues 207 to 210 (DEAD). The 185-residue stretch at 293-477 (ALLKLEVVQK…PFPLLTENAV (185 aa)) folds into the Helicase C-terminal domain. The stretch at 356 to 385 (IATDDNSQTKKQKEEAKGEANKENKKNNKR) forms a coiled coil. Residues 363–381 (QTKKQKEEAKGEANKENKK) show a composition bias toward basic and acidic residues. Disordered regions lie at residues 363 to 388 (QTKK…RSKP) and 568 to 626 (AMGN…QKTV).

It belongs to the DEAD box helicase family. DDX56/DBP9 subfamily.

It catalyses the reaction ATP + H2O = ADP + phosphate + H(+). The chain is DEAD-box ATP-dependent RNA helicase 16 (RH16) from Arabidopsis thaliana (Mouse-ear cress).